We begin with the raw amino-acid sequence, 379 residues long: MKILRKNHPLLKIVNHSFIDLPTPSNISSWWNFGSLLGMCLVIQILTGLFLAMHYTSDTTTAFSSVAHICRDVNYGWLIRYLHANGASMFFICLFIHVGRGIYYGSYVLSETWNIGIILLLTTMATAFVGYVLPWGQMSFWGATVITNLLSAIPYIGNTLVEWIWGGFSVDKATLTRFFAFHFILPFIIAAFALVHLLFLHETGSNNPSGLNSDSDKIPFHPYYTIKDLLGIFLLLLILMALALFFPDVLGDPDNFTPANPLNTPAHIKPEWYFLFAYAILRSIPNKLGGVLALILSILILAAFPLLNTSKQQGLIFRPVTQTIYWIFIANLLVLTWIGGQPVEYPFTMIGQIASVTYFTIITILIPISNTIENNIIKL.

The next 4 membrane-spanning stretches (helical) occupy residues 33–53 (FGSL…FLAM), 77–98 (WLIR…FIHV), 113–133 (WNIG…GYVL), and 178–198 (FFAF…VHLL). Residues His83 and His97 each contribute to the heme b site. Heme b is bound by residues His182 and His196. A ubiquinone is bound at residue His201. A run of 4 helical transmembrane segments spans residues 226–246 (IKDL…ALFF), 288–308 (LGGV…PLLN), 320–340 (VTQT…WIGG), and 347–367 (FTMI…ILIP).

Belongs to the cytochrome b family. In terms of assembly, the cytochrome bc1 complex contains 11 subunits: 3 respiratory subunits (MT-CYB, CYC1 and UQCRFS1), 2 core proteins (UQCRC1 and UQCRC2) and 6 low-molecular weight proteins (UQCRH/QCR6, UQCRB/QCR7, UQCRQ/QCR8, UQCR10/QCR9, UQCR11/QCR10 and a cleavage product of UQCRFS1). This cytochrome bc1 complex then forms a dimer. Heme b is required as a cofactor.

It localises to the mitochondrion inner membrane. In terms of biological role, component of the ubiquinol-cytochrome c reductase complex (complex III or cytochrome b-c1 complex) that is part of the mitochondrial respiratory chain. The b-c1 complex mediates electron transfer from ubiquinol to cytochrome c. Contributes to the generation of a proton gradient across the mitochondrial membrane that is then used for ATP synthesis. The polypeptide is Cytochrome b (MT-CYB) (Akodon philipmyersi (Myers' grass mouse)).